The sequence spans 262 residues: Protein CUSTOS (262 aa).

Disordered regions lie at residues 1 to 79 (MAAP…LQTT) and 126 to 262 (FTSV…IPAN). The segment covering 9–18 (SDSESSNSSS) has biased composition (low complexity). Residues 51 to 61 (ANSQLSTSQPS) are compositionally biased toward polar residues. Serine 61 carries the post-translational modification Phosphoserine. Threonine 79 carries the post-translational modification Phosphothreonine. A Phosphoserine modification is found at serine 138. Threonine 182 is modified (phosphothreonine). Over residues 188-199 (KKKRKLKKKAKK) the composition is skewed to basic residues. The span at 200–209 (VASVDSAVAA) shows a compositional bias: low complexity. The span at 210-221 (TTPTSMATVQKQ) shows a compositional bias: polar residues. Threonine 211 carries the phosphothreonine modification. A Nucleolar localization signal (NLS) motif is present at residues 236–241 (KKKKKA).

Belongs to the CUSTOS family.

It is found in the nucleus envelope. In terms of biological role, plays a role in the regulation of Wnt signaling pathway during early development. The protein is Protein CUSTOS of Homo sapiens (Human).